The following is a 317-amino-acid chain: Retinol dehydrogenase 16 (317 aa).

33–57 serves as a coordination point for NAD(+); sequence FITGCDSGFGNLLARQLDRRGMRVL. Residue S164 participates in substrate binding. Residue Y176 is the Proton acceptor of the active site. Residues 289–308 traverse the membrane as a helical segment; the sequence is FFYLPMSYLPTFLVDALFYW.

It belongs to the short-chain dehydrogenases/reductases (SDR) family. Homodimer. Post-translationally, not N-glycosylated. In terms of tissue distribution, liver &gt; kidney &gt; brain &gt; lung &gt; testis.

The protein resides in the microsome membrane. It is found in the endoplasmic reticulum membrane. It catalyses the reaction all-trans-retinol--[retinol-binding protein] + NAD(+) = all-trans-retinal--[retinol-binding protein] + NADH + H(+). The catalysed reaction is all-trans-retinol + NAD(+) = all-trans-retinal + NADH + H(+). The enzyme catalyses 13-cis-retinol + NAD(+) = 13-cis-retinal + NADH + H(+). It carries out the reaction 11-cis-retinol + NAD(+) = 11-cis-retinal + NADH + H(+). It catalyses the reaction 9-cis-retinol + NAD(+) = 9-cis-retinal + NADH + H(+). The catalysed reaction is 5alpha-androstane-3alpha,17beta-diol + NAD(+) = 17beta-hydroxy-5alpha-androstan-3-one + NADH + H(+). The enzyme catalyses androsterone + NAD(+) = 5alpha-androstan-3,17-dione + NADH + H(+). It participates in cofactor metabolism; retinol metabolism. Its function is as follows. Oxidoreductase with a preference for NAD. Oxidizes all-trans-retinol, 9-cis-retinol, 11-cis-retinol and 13-cis-retinol to the corresponding aldehydes. Has higher activity towards CRBP-bound retinol than with free retinol. Oxidizes 3-alpha-hydroxysteroids. Oxidizes androstanediol and androsterone to dihydrotestosterone and androstanedione. Can also catalyze the reverse reaction. This chain is Retinol dehydrogenase 16, found in Rattus norvegicus (Rat).